The following is a 245-amino-acid chain: Ribonuclease 3 (245 aa).

The RNase III domain occupies Phe-19–Gly-148. Position 61 (Glu-61) interacts with Mg(2+). Asp-65 is a catalytic residue. Mg(2+) contacts are provided by Asp-134 and Glu-137. The active site involves Glu-137. A DRBM domain is found at Asp-174 to Glu-243.

The protein belongs to the ribonuclease III family. Homodimer. It depends on Mg(2+) as a cofactor.

It is found in the cytoplasm. The enzyme catalyses Endonucleolytic cleavage to 5'-phosphomonoester.. Functionally, digests double-stranded RNA. Involved in the processing of primary rRNA transcript to yield the immediate precursors to the large and small rRNAs (23S and 16S). Processes some mRNAs, and tRNAs when they are encoded in the rRNA operon. Processes pre-crRNA and tracrRNA of type II CRISPR loci if present in the organism. The sequence is that of Ribonuclease 3 from Bacillus cereus (strain ATCC 14579 / DSM 31 / CCUG 7414 / JCM 2152 / NBRC 15305 / NCIMB 9373 / NCTC 2599 / NRRL B-3711).